Here is a 163-residue protein sequence, read N- to C-terminus: 3-isopropylmalate dehydratase small subunit (163 aa).

The protein belongs to the LeuD family. LeuD type 2 subfamily. In terms of assembly, heterodimer of LeuC and LeuD.

It catalyses the reaction (2R,3S)-3-isopropylmalate = (2S)-2-isopropylmalate. It participates in amino-acid biosynthesis; L-leucine biosynthesis; L-leucine from 3-methyl-2-oxobutanoate: step 2/4. Its function is as follows. Catalyzes the isomerization between 2-isopropylmalate and 3-isopropylmalate, via the formation of 2-isopropylmaleate. The protein is 3-isopropylmalate dehydratase small subunit of Thermococcus kodakarensis (strain ATCC BAA-918 / JCM 12380 / KOD1) (Pyrococcus kodakaraensis (strain KOD1)).